Here is a 181-residue protein sequence, read N- to C-terminus: Protein GrpE (181 aa).

Over residues 1–12 the composition is skewed to polar residues; that stretch reads MENTQENPTTPS. The interval 1–33 is disordered; the sequence is MENTQENPTTPSAEDIGSEKQAAQGAAPAAEAA. Residues 21–33 are compositionally biased toward low complexity; the sequence is QAAQGAAPAAEAA.

The protein belongs to the GrpE family. As to quaternary structure, homodimer.

It localises to the cytoplasm. Participates actively in the response to hyperosmotic and heat shock by preventing the aggregation of stress-denatured proteins, in association with DnaK and GrpE. It is the nucleotide exchange factor for DnaK and may function as a thermosensor. Unfolded proteins bind initially to DnaJ; upon interaction with the DnaJ-bound protein, DnaK hydrolyzes its bound ATP, resulting in the formation of a stable complex. GrpE releases ADP from DnaK; ATP binding to DnaK triggers the release of the substrate protein, thus completing the reaction cycle. Several rounds of ATP-dependent interactions between DnaJ, DnaK and GrpE are required for fully efficient folding. The protein is Protein GrpE of Burkholderia cenocepacia (strain HI2424).